The chain runs to 141 residues: Nucleoside diphosphate kinase (141 aa).

ATP-binding residues include Lys11, Phe59, Arg87, Thr93, Arg104, and Asn114. His117 serves as the catalytic Pros-phosphohistidine intermediate.

Belongs to the NDK family. Homotetramer. The cofactor is Mg(2+).

The protein resides in the cytoplasm. The catalysed reaction is a 2'-deoxyribonucleoside 5'-diphosphate + ATP = a 2'-deoxyribonucleoside 5'-triphosphate + ADP. It catalyses the reaction a ribonucleoside 5'-diphosphate + ATP = a ribonucleoside 5'-triphosphate + ADP. In terms of biological role, major role in the synthesis of nucleoside triphosphates other than ATP. The ATP gamma phosphate is transferred to the NDP beta phosphate via a ping-pong mechanism, using a phosphorylated active-site intermediate. This chain is Nucleoside diphosphate kinase, found in Vibrio vulnificus (strain CMCP6).